The primary structure comprises 379 residues: UDP-4-amino-4-deoxy-L-arabinose--oxoglutarate aminotransferase (379 aa).

Lysine 182 bears the N6-(pyridoxal phosphate)lysine mark.

This sequence belongs to the DegT/DnrJ/EryC1 family. ArnB subfamily. In terms of assembly, homodimer. The cofactor is pyridoxal 5'-phosphate.

It carries out the reaction UDP-4-amino-4-deoxy-beta-L-arabinose + 2-oxoglutarate = UDP-beta-L-threo-pentopyranos-4-ulose + L-glutamate. Its pathway is nucleotide-sugar biosynthesis; UDP-4-deoxy-4-formamido-beta-L-arabinose biosynthesis; UDP-4-deoxy-4-formamido-beta-L-arabinose from UDP-alpha-D-glucuronate: step 2/3. It functions in the pathway bacterial outer membrane biogenesis; lipopolysaccharide biosynthesis. In terms of biological role, catalyzes the conversion of UDP-4-keto-arabinose (UDP-Ara4O) to UDP-4-amino-4-deoxy-L-arabinose (UDP-L-Ara4N). The modified arabinose is attached to lipid A and is required for resistance to polymyxin and cationic antimicrobial peptides. This is UDP-4-amino-4-deoxy-L-arabinose--oxoglutarate aminotransferase from Salmonella choleraesuis (strain SC-B67).